The following is a 330-amino-acid chain: Delta-aminolevulinic acid dehydratase (330 aa).

Residues cysteine 122, cysteine 124, histidine 131, and cysteine 132 each contribute to the Zn(2+) site. Residue lysine 199 is the Schiff-base intermediate with substrate of the active site. Lysine 199 is modified (N6-succinyllysine). Position 209 (arginine 209) interacts with 5-aminolevulinate. Serine 215 is subject to Phosphoserine. Arginine 221 contacts 5-aminolevulinate. Cysteine 223 is a binding site for Zn(2+). Lysine 252 (schiff-base intermediate with substrate) is an active-site residue. An N6-succinyllysine modification is found at lysine 252. 2 residues coordinate 5-aminolevulinate: serine 279 and tyrosine 318.

The protein belongs to the ALAD family. Homooctamer; active form. Homohexamer; low activity form. The cofactor is Zn(2+).

Its subcellular location is the cytoplasm. It is found in the cytosol. It carries out the reaction 2 5-aminolevulinate = porphobilinogen + 2 H2O + H(+). Its pathway is porphyrin-containing compound metabolism; protoporphyrin-IX biosynthesis; coproporphyrinogen-III from 5-aminolevulinate: step 1/4. Can alternate between a fully active homooctamer and a low-activity homohexamer. A bound magnesium ion may promote the assembly of the fully active homooctamer. The magnesium-binding site is absent in the low-activity homohexamer. Inhibited by compounds that favor the hexameric state. Inhibited by divalent lead ions. The lead ions partially displace the zinc cofactor. Its function is as follows. Catalyzes an early step in the biosynthesis of tetrapyrroles. Binds two molecules of 5-aminolevulinate per subunit, each at a distinct site, and catalyzes their condensation to form porphobilinogen. This chain is Delta-aminolevulinic acid dehydratase (Alad), found in Rattus norvegicus (Rat).